The chain runs to 780 residues: Protein SAV (780 aa).

ATP contacts are provided by residues 253–260 (GPPGTGKT) and 528–535 (GPPGTGKT).

The protein belongs to the AAA ATPase family. CDC48 subfamily.

Its function is as follows. Not yet known, shows ATPase activity. The polypeptide is Protein SAV (sav) (Sulfolobus acidocaldarius (strain ATCC 33909 / DSM 639 / JCM 8929 / NBRC 15157 / NCIMB 11770)).